We begin with the raw amino-acid sequence, 319 residues long: Thiamine pyrophosphokinase (319 aa).

At serine 2 the chain carries N-acetylserine.

Belongs to the thiamine pyrophosphokinase family. Homodimer.

The enzyme catalyses thiamine + ATP = thiamine diphosphate + AMP + H(+). The protein operates within cofactor biosynthesis; thiamine diphosphate biosynthesis; thiamine diphosphate from thiamine: step 1/1. In terms of biological role, essential protein, it is the only enzyme in yeast capable of synthesizing thiamine pyrophosphate (TPP). This Saccharomyces cerevisiae (strain ATCC 204508 / S288c) (Baker's yeast) protein is Thiamine pyrophosphokinase.